Consider the following 266-residue polypeptide: GTP cyclohydrolase FolE2 1 (266 aa).

It belongs to the GTP cyclohydrolase IV family.

It carries out the reaction GTP + H2O = 7,8-dihydroneopterin 3'-triphosphate + formate + H(+). It participates in cofactor biosynthesis; 7,8-dihydroneopterin triphosphate biosynthesis; 7,8-dihydroneopterin triphosphate from GTP: step 1/1. Converts GTP to 7,8-dihydroneopterin triphosphate. In Dechloromonas aromatica (strain RCB), this protein is GTP cyclohydrolase FolE2 1.